The chain runs to 801 residues: MKFSESWLREWVNPAVTTDELTHQITMAGLEVDDVLPVAGSFTGVKVGHVVECGQHPDADKLRVTKVDVGEEELLDIVCGAHNCRQGLKVAVATVGAVLPGDFKIKKAKLRGQPSHGMLCSFTELGIDVESDGIMELAEDAVIGTDFREFLGLDDVTVDVDLTANRADCFSIRGLAREVGVLNRADVTEPSVEAVAPSIEDKVSIEVKAPAACPRYLGRVVKNVNVQAETPLWMQEKLRRCGIRSIDPVVDITNYVLLEQGQPMHAFDLAKIEGGIVVRMAEQGEKLTLLDGSEAELNADTLVVADHNKALAIAGIFGGEESGVTTETKDVLLECAFFAPDHIRGRARSYGLHTDSSMRFERGVDYALQVSAMERATQLLVEICGGEVAPVVAVESEADLPKPNKVALRRTKLDNLLGHHIADADVVEILERLGLTVEASEEGWVAVAPTWRFDIAIEQDLIEEVGRIYGYDNIPNQNPAAALKMHNHVEADLPLKRVRDLLVDRGYHEAITYSFVEPEQQKLVVPGVEPLVLPNPISADMSAMRLGLIQGLLNTVVHNQKRQQPRVRLFEYGLRFIPCESAENGMRQEPMLAGVIAGTRGEEHWDIETNTVDFFDLKGDLEAVLELSANEKAYSFAALSPESKKANPALHPGQSAAIIVDGKEVGVIGTVHPELERKFGLNGRTIVFEIEWSAINSKVIPEAVALSKFPSNRRDIAVVVDEAVASGDIVNACLEQGGEFLKDAKLFDVYVGKGVEEGKKSLAIALTLQSLERTLEDADIAGAVDAIVAHVSEKFGAALRD.

One can recognise a tRNA-binding domain in the interval 39-148; the sequence is AGSFTGVKVG…EDAVIGTDFR (110 aa). Positions 401–476 constitute a B5 domain; sequence PKPNKVALRR…RIYGYDNIPN (76 aa). Mg(2+)-binding residues include aspartate 454, aspartate 460, glutamate 463, and glutamate 464. Residues 707-800 form the FDX-ACB domain; that stretch reads SKFPSNRRDI…VSEKFGAALR (94 aa).

It belongs to the phenylalanyl-tRNA synthetase beta subunit family. Type 1 subfamily. Tetramer of two alpha and two beta subunits. Requires Mg(2+) as cofactor.

It localises to the cytoplasm. The enzyme catalyses tRNA(Phe) + L-phenylalanine + ATP = L-phenylalanyl-tRNA(Phe) + AMP + diphosphate + H(+). The polypeptide is Phenylalanine--tRNA ligase beta subunit (Vibrio parahaemolyticus serotype O3:K6 (strain RIMD 2210633)).